The sequence spans 154 residues: D-ribose pyranase 2 (154 aa).

The active-site Proton donor is H20. Residues D28, H98, and W121–N123 each bind substrate.

The protein belongs to the RbsD / FucU family. RbsD subfamily. In terms of assembly, homodecamer.

It is found in the cytoplasm. It catalyses the reaction beta-D-ribopyranose = beta-D-ribofuranose. Its pathway is carbohydrate metabolism; D-ribose degradation; D-ribose 5-phosphate from beta-D-ribopyranose: step 1/2. In terms of biological role, catalyzes the interconversion of beta-pyran and beta-furan forms of D-ribose. This Rubrobacter xylanophilus (strain DSM 9941 / JCM 11954 / NBRC 16129 / PRD-1) protein is D-ribose pyranase 2.